The sequence spans 353 residues: Photosystem II D2 protein (353 aa).

Thr-2 is subject to N-acetylthreonine. Residue Thr-2 is modified to Phosphothreonine. The chain crosses the membrane as a helical span at residues 41-61 (CAYFALGGWFTGTTFVTSWYT). His-118 provides a ligand contact to chlorophyll a. The helical transmembrane segment at 125-141 (GFMLRQFELARSVQLRP) threads the bilayer. Positions 130 and 143 each coordinate pheophytin a. Residues 153-166 (VFISVFFIYPLGQS) form a helical membrane-spanning segment. His-198 is a chlorophyll a binding site. The chain crosses the membrane as a helical span at residues 208–228 (AALLCAIHGATVENTLFEDGD). Residues His-215 and Phe-262 each contribute to the a plastoquinone site. Position 215 (His-215) interacts with Fe cation. Residue His-269 participates in Fe cation binding. Residues 279–295 (GLWMSALGVVGLALNLR) form a helical membrane-spanning segment.

This sequence belongs to the reaction center PufL/M/PsbA/D family. As to quaternary structure, PSII is composed of 1 copy each of membrane proteins PsbA, PsbB, PsbC, PsbD, PsbE, PsbF, PsbH, PsbI, PsbJ, PsbK, PsbL, PsbM, PsbT, PsbX, PsbY, PsbZ, Psb30/Ycf12, at least 3 peripheral proteins of the oxygen-evolving complex and a large number of cofactors. It forms dimeric complexes. It depends on The D1/D2 heterodimer binds P680, chlorophylls that are the primary electron donor of PSII, and subsequent electron acceptors. It shares a non-heme iron and each subunit binds pheophytin, quinone, additional chlorophylls, carotenoids and lipids. There is also a Cl(-1) ion associated with D1 and D2, which is required for oxygen evolution. The PSII complex binds additional chlorophylls, carotenoids and specific lipids. as a cofactor.

The protein resides in the plastid membrane. The catalysed reaction is 2 a plastoquinone + 4 hnu + 2 H2O = 2 a plastoquinol + O2. In terms of biological role, photosystem II (PSII) is a light-driven water:plastoquinone oxidoreductase that uses light energy to abstract electrons from H(2)O, generating O(2) and a proton gradient subsequently used for ATP formation. It consists of a core antenna complex that captures photons, and an electron transfer chain that converts photonic excitation into a charge separation. The D1/D2 (PsbA/PsbD) reaction center heterodimer binds P680, the primary electron donor of PSII as well as several subsequent electron acceptors. D2 is needed for assembly of a stable PSII complex. In Cuscuta reflexa (Southern Asian dodder), this protein is Photosystem II D2 protein.